The following is a 264-amino-acid chain: 3-methyl-2-oxobutanoate hydroxymethyltransferase (264 aa).

Positions 44 and 83 each coordinate Mg(2+). 3-methyl-2-oxobutanoate-binding positions include 44 to 45 (DS), Asp83, and Lys111. Glu113 is a binding site for Mg(2+). The active-site Proton acceptor is the Glu180.

The protein belongs to the PanB family. In terms of assembly, homodecamer; pentamer of dimers. It depends on Mg(2+) as a cofactor.

It localises to the cytoplasm. The catalysed reaction is 3-methyl-2-oxobutanoate + (6R)-5,10-methylene-5,6,7,8-tetrahydrofolate + H2O = 2-dehydropantoate + (6S)-5,6,7,8-tetrahydrofolate. The protein operates within cofactor biosynthesis; (R)-pantothenate biosynthesis; (R)-pantoate from 3-methyl-2-oxobutanoate: step 1/2. Functionally, catalyzes the reversible reaction in which hydroxymethyl group from 5,10-methylenetetrahydrofolate is transferred onto alpha-ketoisovalerate to form ketopantoate. In Marinobacter nauticus (strain ATCC 700491 / DSM 11845 / VT8) (Marinobacter aquaeolei), this protein is 3-methyl-2-oxobutanoate hydroxymethyltransferase.